A 292-amino-acid polypeptide reads, in one-letter code: Acetylglutamate kinase (292 aa).

Substrate-binding positions include 64 to 65, arginine 86, and asparagine 190; that span reads GG.

The protein belongs to the acetylglutamate kinase family. ArgB subfamily.

Its subcellular location is the cytoplasm. The catalysed reaction is N-acetyl-L-glutamate + ATP = N-acetyl-L-glutamyl 5-phosphate + ADP. It functions in the pathway amino-acid biosynthesis; L-arginine biosynthesis; N(2)-acetyl-L-ornithine from L-glutamate: step 2/4. Its function is as follows. Catalyzes the ATP-dependent phosphorylation of N-acetyl-L-glutamate. The chain is Acetylglutamate kinase from Geotalea uraniireducens (strain Rf4) (Geobacter uraniireducens).